A 78-amino-acid polypeptide reads, in one-letter code: Ferredoxin oxidoreductase 2 subunit ForD (78 aa).

4Fe-4S ferredoxin-type domains are found at residues 3–35 (FVAD…FKAS) and 37–66 (NSAW…HCIE). Residues Cys12, Cys17, Cys20, Cys24, Cys46, Cys49, Cys52, and Cys56 each contribute to the [4Fe-4S] cluster site.

As to quaternary structure, heterotetramer of one alpha, one beta, one delta and one gamma chain. [4Fe-4S] cluster is required as a cofactor.

The sequence is that of Ferredoxin oxidoreductase 2 subunit ForD (forD2) from Aquifex aeolicus (strain VF5).